Reading from the N-terminus, the 305-residue chain is Ribonuclease Z (305 aa).

Residues histidine 63, histidine 65, aspartate 67, histidine 68, histidine 142, aspartate 209, and histidine 267 each contribute to the Zn(2+) site. Aspartate 67 functions as the Proton acceptor in the catalytic mechanism.

The protein belongs to the RNase Z family. Homodimer. The cofactor is Zn(2+).

The catalysed reaction is Endonucleolytic cleavage of RNA, removing extra 3' nucleotides from tRNA precursor, generating 3' termini of tRNAs. A 3'-hydroxy group is left at the tRNA terminus and a 5'-phosphoryl group is left at the trailer molecule.. Functionally, zinc phosphodiesterase, which displays some tRNA 3'-processing endonuclease activity. Probably involved in tRNA maturation, by removing a 3'-trailer from precursor tRNA. The sequence is that of Ribonuclease Z from Nocardia farcinica (strain IFM 10152).